A 151-amino-acid polypeptide reads, in one-letter code: Regulatory protein RecX (151 aa).

The protein belongs to the RecX family.

It is found in the cytoplasm. Functionally, modulates RecA activity. This is Regulatory protein RecX from Prosthecochloris aestuarii (strain DSM 271 / SK 413).